Consider the following 378-residue polypeptide: Chaperone protein DnaJ (378 aa).

Positions 6-70 constitute a J domain; that stretch reads DYYDVLGVSR…QKRQQYDQFG (65 aa). The segment at 137 to 219 adopts a CR-type zinc-finger fold; it reads GKTSEISYSR…CHGKGVKTQK (83 aa). Positions 150, 153, 167, 170, 193, 196, 207, and 210 each coordinate Zn(2+). 4 CXXCXGXG motif repeats span residues 150 to 157, 167 to 174, 193 to 200, and 207 to 214; these read CEVCKGSG, CDKCGGSG, CDKCTGSG, and CHNCHGKG.

It belongs to the DnaJ family. In terms of assembly, homodimer. It depends on Zn(2+) as a cofactor.

The protein localises to the cytoplasm. Functionally, participates actively in the response to hyperosmotic and heat shock by preventing the aggregation of stress-denatured proteins and by disaggregating proteins, also in an autonomous, DnaK-independent fashion. Unfolded proteins bind initially to DnaJ; upon interaction with the DnaJ-bound protein, DnaK hydrolyzes its bound ATP, resulting in the formation of a stable complex. GrpE releases ADP from DnaK; ATP binding to DnaK triggers the release of the substrate protein, thus completing the reaction cycle. Several rounds of ATP-dependent interactions between DnaJ, DnaK and GrpE are required for fully efficient folding. Also involved, together with DnaK and GrpE, in the DNA replication of plasmids through activation of initiation proteins. The sequence is that of Chaperone protein DnaJ from Lactobacillus delbrueckii subsp. bulgaricus (strain ATCC 11842 / DSM 20081 / BCRC 10696 / JCM 1002 / NBRC 13953 / NCIMB 11778 / NCTC 12712 / WDCM 00102 / Lb 14).